Here is a 650-residue protein sequence, read N- to C-terminus: 1-deoxy-D-xylulose-5-phosphate synthase (650 aa).

Residues H73 and 114–116 (SHA) each bind thiamine diphosphate. Residue D145 participates in Mg(2+) binding. Thiamine diphosphate contacts are provided by residues 146–147 (GA), N174, Y285, and E367. N174 provides a ligand contact to Mg(2+). The tract at residues 631–650 (MGDEVGADESNQTPAGGGQA) is disordered.

It belongs to the transketolase family. DXPS subfamily. As to quaternary structure, homodimer. Requires Mg(2+) as cofactor. The cofactor is thiamine diphosphate.

The enzyme catalyses D-glyceraldehyde 3-phosphate + pyruvate + H(+) = 1-deoxy-D-xylulose 5-phosphate + CO2. Its pathway is metabolic intermediate biosynthesis; 1-deoxy-D-xylulose 5-phosphate biosynthesis; 1-deoxy-D-xylulose 5-phosphate from D-glyceraldehyde 3-phosphate and pyruvate: step 1/1. Functionally, catalyzes the acyloin condensation reaction between C atoms 2 and 3 of pyruvate and glyceraldehyde 3-phosphate to yield 1-deoxy-D-xylulose-5-phosphate (DXP). This chain is 1-deoxy-D-xylulose-5-phosphate synthase, found in Parafrankia sp. (strain EAN1pec).